Consider the following 525-residue polypeptide: Probable histidine ammonia-lyase (525 aa).

Residues Ala145 to Gly147 constitute a cross-link (5-imidazolinone (Ala-Gly)). At Ser146 the chain carries 2,3-didehydroalanine (Ser).

Belongs to the PAL/histidase family. In terms of processing, contains an active site 4-methylidene-imidazol-5-one (MIO), which is formed autocatalytically by cyclization and dehydration of residues Ala-Ser-Gly.

Its subcellular location is the cytoplasm. The enzyme catalyses L-histidine = trans-urocanate + NH4(+). Its pathway is amino-acid degradation; L-histidine degradation into L-glutamate; N-formimidoyl-L-glutamate from L-histidine: step 1/3. In Halobacterium salinarum (strain ATCC 29341 / DSM 671 / R1), this protein is Probable histidine ammonia-lyase.